The sequence spans 696 residues: DNA ligase (696 aa).

NAD(+) is bound by residues 43–47 (DGEFD), 92–93 (SL), and Glu-122. Lys-124 acts as the N6-AMP-lysine intermediate in catalysis. Arg-145, Glu-185, Lys-301, and Lys-325 together coordinate NAD(+). Residues Cys-419, Cys-422, Cys-438, and Cys-444 each contribute to the Zn(2+) site. Residues 608–696 (SIPRNLEGLS…GPDAVAESGV (89 aa)) form the BRCT domain.

This sequence belongs to the NAD-dependent DNA ligase family. LigA subfamily. The cofactor is Mg(2+). It depends on Mn(2+) as a cofactor.

It carries out the reaction NAD(+) + (deoxyribonucleotide)n-3'-hydroxyl + 5'-phospho-(deoxyribonucleotide)m = (deoxyribonucleotide)n+m + AMP + beta-nicotinamide D-nucleotide.. Its function is as follows. DNA ligase that catalyzes the formation of phosphodiester linkages between 5'-phosphoryl and 3'-hydroxyl groups in double-stranded DNA using NAD as a coenzyme and as the energy source for the reaction. It is essential for DNA replication and repair of damaged DNA. The chain is DNA ligase from Rhodococcus jostii (strain RHA1).